The sequence spans 382 residues: Trophoblast glycoprotein-like (382 aa).

A signal peptide spans 1 to 26 (MAPRAGQPGLQGLLLVAAALSQPAAP). Disulfide bonds link Cys-27-Cys-33 and Cys-31-Cys-43. Topologically, residues 27 to 307 (CPFQCYCFGG…EAAGPELEAS (281 aa)) are extracellular. LRR repeat units follow at residues 57 to 80 (PPDA…AFAG), 93 to 116 (LPLL…AFDG), 117 to 140 (LPSL…AFRG), 171 to 194 (LAEL…ALRL), and 196 to 217 (RLEQ…ELRA). Residue Asn-62 is glycosylated (N-linked (GlcNAc...) asparagine). Intrachain disulfides connect Cys-238-Cys-264 and Cys-240-Cys-285. Residues 308 to 328 (YVFFGLVLALIGLIFLMVLYL) form a helical membrane-spanning segment. Topologically, residues 329 to 382 (NRRGIQRWMRNLREACRDQMEGYHYRYEQDADPRRAPAPAAPAGSRATSPGSGL) are cytoplasmic. The segment at 358 to 382 (DADPRRAPAPAAPAGSRATSPGSGL) is disordered. Positions 365–382 (PAPAAPAGSRATSPGSGL) are enriched in low complexity.

It is found in the membrane. This chain is Trophoblast glycoprotein-like (TPBGL), found in Homo sapiens (Human).